The sequence spans 92 residues: YcgL domain-containing protein HS_0805 (92 aa).

Residues 1–85 (MLCAIYKTKR…QQENLLEQER (85 aa)) enclose the YcgL domain.

The polypeptide is YcgL domain-containing protein HS_0805 (Histophilus somni (strain 129Pt) (Haemophilus somnus)).